Here is a 468-residue protein sequence, read N- to C-terminus: Tripartite motif-containing protein 75 (468 aa).

The RING-type zinc-finger motif lies at 16-57; that stretch reads CSICLDYLSDPVTIECGHNFCRSCIQQSWLDLQELFPCPVCR. A B box-type zinc finger spans residues 92–133; the sequence is EETTLCEKHNQPLSVFCKEDLMVLCPLCTQPPDHQGHHVRPI. Zn(2+)-binding residues include cysteine 97, histidine 100, cysteine 119, and histidine 125. A coiled-coil region spans residues 170-222; it reads LELREMVENQRQELSSEFEHLNQFLDREQQAVLSRLAEEEKDNQQKLSANITA. In terms of domain architecture, B30.2/SPRY spans 276–468; sequence CSFPPQYSAL…LRICTGTVCE (193 aa).

It belongs to the TRIM/RBCC family.

It localises to the cytoplasm. The protein resides in the cytoskeleton. Its subcellular location is the spindle. Its function is as follows. May play a role in female meiosis. This chain is Tripartite motif-containing protein 75, found in Homo sapiens (Human).